The sequence spans 140 residues: ATP synthase epsilon chain (140 aa).

This sequence belongs to the ATPase epsilon chain family. As to quaternary structure, F-type ATPases have 2 components, CF(1) - the catalytic core - and CF(0) - the membrane proton channel. CF(1) has five subunits: alpha(3), beta(3), gamma(1), delta(1), epsilon(1). CF(0) has three main subunits: a, b and c.

The protein resides in the cell inner membrane. Its function is as follows. Produces ATP from ADP in the presence of a proton gradient across the membrane. This chain is ATP synthase epsilon chain, found in Colwellia maris.